A 404-amino-acid chain; its full sequence is Glycosylated lysosomal membrane protein (404 aa).

An N-terminal signal peptide occupies residues 1–35 (MFRCWGPHWGWVPCAPTPWLLLSLLVCSAPFGLQG). Residues 36 to 370 (EETRQVSMEV…VDIFSPLVLG (335 aa)) are Lumenal-facing. N-linked (GlcNAc...) asparagine glycans are attached at residues asparagine 64, asparagine 85, asparagine 94, asparagine 133, asparagine 157, asparagine 166, asparagine 185, asparagine 228, and asparagine 331. The chain crosses the membrane as a helical span at residues 371 to 391 (IMAVALGAPGLMFLGGGLFLL). At 392-404 (LRHRRYSEYQSIN) the chain is on the cytoplasmic side. The Lysosomal targeting motif motif lies at 400–404 (YQSIN).

It belongs to the GLMP family. As to quaternary structure, interacts (via lumenal domain) with lysosomal protein MFSD1; the interaction starts while both proteins are still in the endoplasmic reticulum and is required for stabilization of MFSD1 in lysosomes but has no direct effect on its targeting to lysosomes or transporter activity. Highly N-glycosylated. N-glycosylation is essential for GLMP stability and for MFSD1 lysosomal localization. Detected in brain, heart, liver, kidney, lung, intestine, testis and spleen. Expressed at highest levels in kidney cortex. However, another study reports highest expression levels in lung. Expressed in myoblasts with expression increasing during differentiation into myotubes.

Its subcellular location is the lysosome membrane. Required to protect lysosomal transporter MFSD1 from lysosomal proteolysis and for MFSD1 lysosomal localization. The chain is Glycosylated lysosomal membrane protein from Mus musculus (Mouse).